Consider the following 63-residue polypeptide: Large ribosomal subunit protein bL28A (63 aa).

The protein belongs to the bacterial ribosomal protein bL28 family.

The polypeptide is Large ribosomal subunit protein bL28A (Nocardia farcinica (strain IFM 10152)).